The sequence spans 466 residues: Soluble pyridine nucleotide transhydrogenase (466 aa).

36-45 (ERYHNVGGGC) lines the FAD pocket.

This sequence belongs to the class-I pyridine nucleotide-disulfide oxidoreductase family. Requires FAD as cofactor.

The protein localises to the cytoplasm. It carries out the reaction NAD(+) + NADPH = NADH + NADP(+). Its function is as follows. Conversion of NADPH, generated by peripheral catabolic pathways, to NADH, which can enter the respiratory chain for energy generation. The protein is Soluble pyridine nucleotide transhydrogenase of Salmonella paratyphi A (strain ATCC 9150 / SARB42).